Here is a 224-residue protein sequence, read N- to C-terminus: Phosphoribosyltransferase domain-containing protein 1 (224 aa).

Residues E140 and D141 each coordinate Mg(2+). GMP contacts are provided by residues 140 to 148 (EDIINTGRT), K172, 193 to 194 (FV), and D200. D200 contacts Mg(2+).

The protein belongs to the purine/pyrimidine phosphoribosyltransferase family.

The protein is Phosphoribosyltransferase domain-containing protein 1 (prtfdc1) of Xenopus laevis (African clawed frog).